We begin with the raw amino-acid sequence, 448 residues long: Phosphoglucosamine mutase (448 aa).

Catalysis depends on Ser100, which acts as the Phosphoserine intermediate. Positions 100, 240, 242, and 244 each coordinate Mg(2+). Phosphoserine is present on Ser100.

It belongs to the phosphohexose mutase family. Mg(2+) is required as a cofactor. In terms of processing, activated by phosphorylation.

It catalyses the reaction alpha-D-glucosamine 1-phosphate = D-glucosamine 6-phosphate. In terms of biological role, catalyzes the conversion of glucosamine-6-phosphate to glucosamine-1-phosphate. This chain is Phosphoglucosamine mutase, found in Clostridium tetani (strain Massachusetts / E88).